The following is a 313-amino-acid chain: Putative adhesin P1-like protein MPN_202 (313 aa).

The segment covering 1–16 (MGSQNQGSTTTTSAGN) has biased composition (low complexity). The segment at 1–44 (MGSQNQGSTTTTSAGNPDSLVTDKVDQKGQVQTSGQNLSDTNYT) is disordered. A compositionally biased stretch (polar residues) spans 29–44 (GQVQTSGQNLSDTNYT).

Belongs to the adhesin P1 family.

In Mycoplasma pneumoniae (strain ATCC 29342 / M129 / Subtype 1) (Mycoplasmoides pneumoniae), this protein is Putative adhesin P1-like protein MPN_202.